Here is a 271-residue protein sequence, read N- to C-terminus: MLIDVKPLYSEIKNLIMDRMSKLKKVPKLVAVTYKPDPSTISYLKSQEKAAKRFGLDYEIFEASNSIEVLEKLRKLSEDKSVNGIFVTHPLPELDEMLVFENLSPEKDIEGRHPYNLGMLMYGNEFFAPCTAEAVVKILENVTEITGKNVVIIGRSTTVGKPLATMLLRRDRSATVTVCHTKTRNLPEITRNADIIVAAAGKARLVTKEMVKSDSIVIDVGINVVDGKIVGDVKEDVSEIAKVTPVPGGVGRITTALLMEHVVKSAEKMNF.

NADP(+) contacts are provided by residues 154–156, T181, and I222; that span reads GRS.

This sequence belongs to the tetrahydrofolate dehydrogenase/cyclohydrolase family. Homodimer.

The enzyme catalyses (6R)-5,10-methylene-5,6,7,8-tetrahydrofolate + NADP(+) = (6R)-5,10-methenyltetrahydrofolate + NADPH. It carries out the reaction (6R)-5,10-methenyltetrahydrofolate + H2O = (6R)-10-formyltetrahydrofolate + H(+). It functions in the pathway one-carbon metabolism; tetrahydrofolate interconversion. Its function is as follows. Catalyzes the oxidation of 5,10-methylenetetrahydrofolate to 5,10-methenyltetrahydrofolate and then the hydrolysis of 5,10-methenyltetrahydrofolate to 10-formyltetrahydrofolate. The protein is Bifunctional protein FolD of Thermosipho africanus (strain TCF52B).